The chain runs to 347 residues: 3-isopropylmalate dehydrogenase (347 aa).

Gly-76 to Glu-87 provides a ligand contact to NAD(+). Substrate-binding residues include Arg-94, Arg-104, Arg-132, and Asp-217. Mg(2+) contacts are provided by Asp-217, Asp-241, and Asp-245. Gly-275–Asn-287 serves as a coordination point for NAD(+).

It belongs to the isocitrate and isopropylmalate dehydrogenases family. LeuB type 1 subfamily. Homodimer. It depends on Mg(2+) as a cofactor. The cofactor is Mn(2+).

It localises to the cytoplasm. The enzyme catalyses (2R,3S)-3-isopropylmalate + NAD(+) = 4-methyl-2-oxopentanoate + CO2 + NADH. Its pathway is amino-acid biosynthesis; L-leucine biosynthesis; L-leucine from 3-methyl-2-oxobutanoate: step 3/4. In terms of biological role, catalyzes the oxidation of 3-carboxy-2-hydroxy-4-methylpentanoate (3-isopropylmalate) to 3-carboxy-4-methyl-2-oxopentanoate. The product decarboxylates to 4-methyl-2 oxopentanoate. This Staphylococcus epidermidis (strain ATCC 35984 / DSM 28319 / BCRC 17069 / CCUG 31568 / BM 3577 / RP62A) protein is 3-isopropylmalate dehydrogenase.